A 963-amino-acid polypeptide reads, in one-letter code: Aminopeptidase N (963 aa).

Over 2–8 the chain is Cytoplasmic; sequence AKGFYIS. Residues 9–32 traverse the membrane as a helical; Signal-anchor for type II membrane protein segment; sequence KALGILGILLGVAAVATIIALSVV. The segment at 33-64 is cytosolic Ser/Thr-rich junction; sequence YAQEKNKNAEHVPQAPTSPTITTTAAITLDQS. At 33 to 963 the chain is on the extracellular side; sequence YAQEKNKNAE…VVLNWFIEHS (931 aa). Residues 65 to 963 are metalloprotease; sequence KPWNRYRLPT…VVLNWFIEHS (899 aa). Residues asparagine 82 and asparagine 124 are each glycosylated (N-linked (GlcNAc...) asparagine). A Sulfotyrosine modification is found at tyrosine 171. N-linked (GlcNAc...) asparagine glycans are attached at residues asparagine 229, asparagine 237, asparagine 258, asparagine 286, asparagine 314, and asparagine 328. A substrate-binding site is contributed by 347–351; sequence GAMEN. Histidine 383 serves as a coordination point for Zn(2+). Residue glutamate 384 is the Proton acceptor of the active site. The Zn(2+) site is built by histidine 387 and glutamate 406. N-linked (GlcNAc...) asparagine glycans are attached at residues asparagine 506, asparagine 556, asparagine 569, asparagine 622, asparagine 646, and asparagine 736. An interaction with TGEV spike glycoprotein region spans residues 717 to 813; that stretch reads KYLRKQVEPL…DQWDFAWGQL (97 aa). 2 disulfide bridges follow: cysteine 758–cysteine 765 and cysteine 795–cysteine 831.

It belongs to the peptidase M1 family. As to quaternary structure, homodimer. Interacts with SLC6A19. (Microbial infection) Interacts with TGEV and PRCoV spike glycoprotein. The cofactor is Zn(2+). Sulfated. Post-translationally, N- and O-glycosylated. In terms of processing, may undergo proteolysis and give rise to a soluble form.

It localises to the cell membrane. It carries out the reaction Release of an N-terminal amino acid, Xaa-|-Yaa- from a peptide, amide or arylamide. Xaa is preferably Ala, but may be most amino acids including Pro (slow action). When a terminal hydrophobic residue is followed by a prolyl residue, the two may be released as an intact Xaa-Pro dipeptide.. Its function is as follows. Broad specificity aminopeptidase which plays a role in the final digestion of peptides generated from hydrolysis of proteins by gastric and pancreatic proteases. Also involved in the processing of various peptides including peptide hormones, such as angiotensin III and IV, neuropeptides, and chemokines. May also be involved the cleavage of peptides bound to major histocompatibility complex class II molecules of antigen presenting cells. May have a role in angiogenesis and promote cholesterol crystallization. It is able to degrade Leu-enkephalin and Met-enkephalin but not cholecystokinin CCK8, neuromedin C (GRP-10), somatostatin-14, substance P and vasoactive intestinal peptide. May have a role in amino acid transport by acting as binding partner of amino acid transporter SLC6A19 and regulating its activity. Functionally, (Microbial infection) In case of porcine transmissible gastroenteritis coronavirus (TGEV) and porcine respiratory coronavirus (PRCoV) infections, serves as a receptor for TGEV and PRCoV spike glycoprotein in a species-specific manner. The protein is Aminopeptidase N (ANPEP) of Sus scrofa (Pig).